The primary structure comprises 729 residues: Fatty acid oxidation complex subunit alpha (729 aa).

Residues methionine 1–lysine 189 form an enoyl-CoA hydratase/isomerase region. Aspartate 296 lines the substrate pocket. The tract at residues glutamate 311–alanine 729 is 3-hydroxyacyl-CoA dehydrogenase. Residues methionine 324, aspartate 343, valine 400–glutamate 402, lysine 407, and serine 429 each bind NAD(+). Residue histidine 450 is the For 3-hydroxyacyl-CoA dehydrogenase activity of the active site. Asparagine 453 lines the NAD(+) pocket. Residues asparagine 500 and tyrosine 660 each coordinate substrate. Residues arginine 708–alanine 729 form a disordered region.

It in the N-terminal section; belongs to the enoyl-CoA hydratase/isomerase family. This sequence in the C-terminal section; belongs to the 3-hydroxyacyl-CoA dehydrogenase family. Heterotetramer of two alpha chains (FadB) and two beta chains (FadA).

It carries out the reaction a (3S)-3-hydroxyacyl-CoA + NAD(+) = a 3-oxoacyl-CoA + NADH + H(+). It catalyses the reaction a (3S)-3-hydroxyacyl-CoA = a (2E)-enoyl-CoA + H2O. The enzyme catalyses a 4-saturated-(3S)-3-hydroxyacyl-CoA = a (3E)-enoyl-CoA + H2O. The catalysed reaction is (3S)-3-hydroxybutanoyl-CoA = (3R)-3-hydroxybutanoyl-CoA. It carries out the reaction a (3Z)-enoyl-CoA = a 4-saturated (2E)-enoyl-CoA. It catalyses the reaction a (3E)-enoyl-CoA = a 4-saturated (2E)-enoyl-CoA. Its pathway is lipid metabolism; fatty acid beta-oxidation. In terms of biological role, involved in the aerobic and anaerobic degradation of long-chain fatty acids via beta-oxidation cycle. Catalyzes the formation of 3-oxoacyl-CoA from enoyl-CoA via L-3-hydroxyacyl-CoA. It can also use D-3-hydroxyacyl-CoA and cis-3-enoyl-CoA as substrate. In Escherichia coli O139:H28 (strain E24377A / ETEC), this protein is Fatty acid oxidation complex subunit alpha.